A 244-amino-acid chain; its full sequence is Chlorosome protein I (244 aa).

The 95-residue stretch at 1–95 folds into the 2Fe-2S ferredoxin-type domain; the sequence is MNLIINDKTA…TVKVLSRPEE (95 aa). [2Fe-2S] cluster-binding residues include Cys-33, Cys-39, Cys-42, and Cys-77.

It depends on [2Fe-2S] cluster as a cofactor.

It localises to the chlorosome. Could play a direct role in the oxidation or reduction of the quenching species formed in the chlorosome. The protein is Chlorosome protein I (csmI) of Chlorobaculum tepidum (strain ATCC 49652 / DSM 12025 / NBRC 103806 / TLS) (Chlorobium tepidum).